We begin with the raw amino-acid sequence, 290 residues long: MLKDLFSKKKKYATIPSEQAKQDVPEGIMTKCPKCKKIMYTKELVKNLRVCISCGYHHPMSAPERIGCLLDEGTFQEYDRHLLSKNPLEFPQYMEKIEEDREKTKLNEAVVTGEGTINGFPVVIAVMDSRFRMGSMGSVVGEKIARAIERAMEKSVPFIIFTASGGARMQEGVLSLMQMAKTSAALKLFSEQGGLIISVMTHPTTGGVSASFASLGDYNFAEPGALIGFAGRRVIEQTVREELPDDFQTAEFLLKHGQLDAVIPRHELKDTLTNVLDIHQSRGGDEWHTN.

The 263-residue stretch at 28–290 (IMTKCPKCKK…SRGGDEWHTN (263 aa)) folds into the CoA carboxyltransferase N-terminal domain. Residues Cys32, Cys35, Cys51, and Cys54 each coordinate Zn(2+). The C4-type zinc finger occupies 32–54 (CPKCKKIMYTKELVKNLRVCISC).

This sequence belongs to the AccD/PCCB family. Acetyl-CoA carboxylase is a heterohexamer composed of biotin carboxyl carrier protein (AccB), biotin carboxylase (AccC) and two subunits each of ACCase subunit alpha (AccA) and ACCase subunit beta (AccD). Requires Zn(2+) as cofactor.

It localises to the cytoplasm. It catalyses the reaction N(6)-carboxybiotinyl-L-lysyl-[protein] + acetyl-CoA = N(6)-biotinyl-L-lysyl-[protein] + malonyl-CoA. It functions in the pathway lipid metabolism; malonyl-CoA biosynthesis; malonyl-CoA from acetyl-CoA: step 1/1. In terms of biological role, component of the acetyl coenzyme A carboxylase (ACC) complex. Biotin carboxylase (BC) catalyzes the carboxylation of biotin on its carrier protein (BCCP) and then the CO(2) group is transferred by the transcarboxylase to acetyl-CoA to form malonyl-CoA. The polypeptide is Acetyl-coenzyme A carboxylase carboxyl transferase subunit beta (Anoxybacillus flavithermus (strain DSM 21510 / WK1)).